The following is a 717-amino-acid chain: MQKFTFFVSCAKGIELLLKDELERLGISSQEKLAGVEFEGSIKDAYKVCIYSYLASQVMLKVATDKVINQQDLYEFISSINWMDYFAVDKTFKIIISGKHYDFNNTMFVSQKTKDAIVDQFRNVINQRPNIDTENPDNVIKLHLHKQFVNVFLCLNIDSLHKRSYRQFQGQAPLKESLAAAILIKAGWLEELKKHQPILIDPMCGSGTILIEAALMAKNIAPVLLNKEFKIFNSKFHNQELWDNLLEIAKNSQKVTNAIICGFDIDNNVLDKAQRNIYQAGVEDVVTVKRQDIRDLENEFESEGLIVTNPPYGERLYGDQLDELLDIFNGFGDRLSQDFYGWKVAVLTSFADSIKEMQLRTTERNKFYNGAIETILYQFKINEHAKFKHETQLEKNIRIAEASAQKSDEHIDFANKLKKNLKSLKPWLKQTGLECYRLYDADIPTFAVAVDVYSEHIFLQEYRADATIDQNIAKQRFYQAIYQIHKTLDIKYENIHTRVRQRQKGKEQYQKENDKNKFHIINEFDAKFYVNFDDYLDTGIFLDHRKIRQLVAKAAKNKTLLNLFSYTCTASVHAALKGAKTTSVDMSNTYLEWGKNNFTLNNIDAKKHSFIQADCISWLKTNKDKFDVIFLDPPTFSNSKRMDDILDIQRDHELLINLAMDSLKKDGILYFSNNYRRFKMSPQILEKFNCENIDKICLSRDFLSNKNIHNCWEIKYK.

One can recognise a THUMP domain in the interval 44–155; it reads DAYKVCIYSY…KQFVNVFLCL (112 aa).

This sequence belongs to the methyltransferase superfamily. RlmKL family.

The protein resides in the cytoplasm. The catalysed reaction is guanosine(2445) in 23S rRNA + S-adenosyl-L-methionine = N(2)-methylguanosine(2445) in 23S rRNA + S-adenosyl-L-homocysteine + H(+). It catalyses the reaction guanosine(2069) in 23S rRNA + S-adenosyl-L-methionine = N(2)-methylguanosine(2069) in 23S rRNA + S-adenosyl-L-homocysteine + H(+). In terms of biological role, specifically methylates the guanine in position 2445 (m2G2445) and the guanine in position 2069 (m7G2069) of 23S rRNA. This chain is Ribosomal RNA large subunit methyltransferase K/L, found in Francisella tularensis subsp. holarctica (strain FTNF002-00 / FTA).